A 661-amino-acid polypeptide reads, in one-letter code: UvrABC system protein B (661 aa).

In terms of domain architecture, Helicase ATP-binding spans 24–209; that stretch reads NGLNKGYRFQ…IFPSYQDEGI (186 aa). 37-44 contacts ATP; that stretch reads GVTGSGKT. Positions 90–113 match the Beta-hairpin motif; it reads YYDYYQPEAYVPTKDLYIEKSADI. The 165-residue stretch at 430–594 folds into the Helicase C-terminal domain; that stretch reads DLVNEIVQVK…IIKPLMEDIF (165 aa). Residues 622-657 enclose the UVR domain; it reads EEYAALLEEEMYKAASELRYEDAARLRDELFKIKEE.

Belongs to the UvrB family. In terms of assembly, forms a heterotetramer with UvrA during the search for lesions. Interacts with UvrC in an incision complex.

It is found in the cytoplasm. Functionally, the UvrABC repair system catalyzes the recognition and processing of DNA lesions. A damage recognition complex composed of 2 UvrA and 2 UvrB subunits scans DNA for abnormalities. Upon binding of the UvrA(2)B(2) complex to a putative damaged site, the DNA wraps around one UvrB monomer. DNA wrap is dependent on ATP binding by UvrB and probably causes local melting of the DNA helix, facilitating insertion of UvrB beta-hairpin between the DNA strands. Then UvrB probes one DNA strand for the presence of a lesion. If a lesion is found the UvrA subunits dissociate and the UvrB-DNA preincision complex is formed. This complex is subsequently bound by UvrC and the second UvrB is released. If no lesion is found, the DNA wraps around the other UvrB subunit that will check the other stand for damage. The protein is UvrABC system protein B of Fervidobacterium nodosum (strain ATCC 35602 / DSM 5306 / Rt17-B1).